The primary structure comprises 358 residues: Metacaspase-3 (358 aa).

The tract at residues 1-84 (MGFDFGCLLK…APTHVSGTFR (84 aa)) is important for catalytic activity. Catalysis depends on residues His168 and Cys223.

This sequence belongs to the peptidase C14B family. Post-translationally, in epimastigotes, the unprocessed enzyme appears to be the main form. Auto-processing is dispensable for catalytic activity towards small oligopeptide substrates.

The protein localises to the cytoplasm. Its subcellular location is the nucleus. With respect to regulation, activated by Ca(2+). Cysteine protease that cleaves specifically after arginine or lysine residues. In epimastigotes, may play a role in cell cycle G1/S transition. This chain is Metacaspase-3, found in Trypanosoma cruzi (strain CL Brener).